A 560-amino-acid polypeptide reads, in one-letter code: Glucose-6-phosphate isomerase, cytosolic (560 aa).

Ala-2 carries the N-acetylalanine modification. The Proton donor role is filled by Glu-361. Active-site residues include His-392 and Lys-517.

The protein belongs to the GPI family. As to quaternary structure, homodimer.

It localises to the cytoplasm. It carries out the reaction alpha-D-glucose 6-phosphate = beta-D-fructose 6-phosphate. Its pathway is carbohydrate degradation; glycolysis; D-glyceraldehyde 3-phosphate and glycerone phosphate from D-glucose: step 2/4. The protein is Glucose-6-phosphate isomerase, cytosolic (PGIC) of Arabidopsis lyrata subsp. petraea (Northern rock-cress).